Consider the following 185-residue polypeptide: CASP-like protein SELMODRAFT_413556 (185 aa).

Residues 1–89 (MATLPLSLIF…AVTVLFYLAK (89 aa)) lie on the Cytoplasmic side of the membrane. A helical transmembrane segment spans residues 90–110 (LVFGILGLALSIIWLLHIIVF). Topologically, residues 111–131 (MLVNPPAFPFLNQVFIQLDSA) are extracellular. A helical transmembrane segment spans residues 132–152 (WGLLGTTAFAIFCYYLIMSVI). Residues 153–163 (SGEMHSIHPMK) are Cytoplasmic-facing. The helical transmembrane segment at 164–184 (YQGTLMNSFLFNVAIILLCST) threads the bilayer. A topological domain (extracellular) is located at residue R185.

Belongs to the Casparian strip membrane proteins (CASP) family. As to quaternary structure, homodimer and heterodimers.

The protein resides in the cell membrane. The sequence is that of CASP-like protein SELMODRAFT_413556 from Selaginella moellendorffii (Spikemoss).